Here is a 157-residue protein sequence, read N- to C-terminus: Transcription elongation factor GreA (157 aa).

Positions 1-60 are disordered; the sequence is MEKVPMTSAGFAALGEELKKRQSEDRPRIIEHIAEARSHGDLSENAEYHAAKEEQSHNEG. Residues 16–60 are compositionally biased toward basic and acidic residues; the sequence is EELKKRQSEDRPRIIEHIAEARSHGDLSENAEYHAAKEEQSHNEG. Residues 46–73 are a coiled coil; the sequence is AEYHAAKEEQSHNEGRIAELEDKLARAD.

Belongs to the GreA/GreB family.

In terms of biological role, necessary for efficient RNA polymerase transcription elongation past template-encoded arresting sites. The arresting sites in DNA have the property of trapping a certain fraction of elongating RNA polymerases that pass through, resulting in locked ternary complexes. Cleavage of the nascent transcript by cleavage factors such as GreA or GreB allows the resumption of elongation from the new 3'terminus. GreA releases sequences of 2 to 3 nucleotides. This chain is Transcription elongation factor GreA, found in Bradyrhizobium diazoefficiens (strain JCM 10833 / BCRC 13528 / IAM 13628 / NBRC 14792 / USDA 110).